The following is a 91-amino-acid chain: Sec-independent protein translocase protein TatA (91 aa).

The helical transmembrane segment at 2–22 (ANLGFPELVLIAVVILVLFGW) threads the bilayer. The segment covering 43–55 (VSEMKNDGAEAEK) has biased composition (basic and acidic residues). The segment at 43–91 (VSEMKNDGAEAEKTSAASTKTDEITSVSSTDTPQPTVTVESKDEKKHPA) is disordered. Residues 57–81 (SAASTKTDEITSVSSTDTPQPTVTV) are compositionally biased toward polar residues. Positions 82 to 91 (ESKDEKKHPA) are enriched in basic and acidic residues.

Belongs to the TatA/E family. In terms of assembly, the Tat system comprises two distinct complexes: a TatABC complex, containing multiple copies of TatA, TatB and TatC subunits, and a separate TatA complex, containing only TatA subunits. Substrates initially bind to the TatABC complex, which probably triggers association of the separate TatA complex to form the active translocon.

The protein resides in the cell membrane. Functionally, part of the twin-arginine translocation (Tat) system that transports large folded proteins containing a characteristic twin-arginine motif in their signal peptide across membranes. TatA could form the protein-conducting channel of the Tat system. This Corynebacterium kroppenstedtii (strain DSM 44385 / JCM 11950 / CIP 105744 / CCUG 35717) protein is Sec-independent protein translocase protein TatA.